A 410-amino-acid polypeptide reads, in one-letter code: Acetate kinase (410 aa).

Asn-7 is a Mg(2+) binding site. Lys-14 is a binding site for ATP. Arg-88 provides a ligand contact to substrate. The Proton donor/acceptor role is filled by Asp-145. ATP contacts are provided by residues His-203 to Gly-207, Asp-278 to Arg-280, and Gly-326 to Asn-330. Glu-379 is a binding site for Mg(2+).

Belongs to the acetokinase family. Homodimer. It depends on Mg(2+) as a cofactor. Mn(2+) is required as a cofactor.

It localises to the cytoplasm. The catalysed reaction is acetate + ATP = acetyl phosphate + ADP. It functions in the pathway metabolic intermediate biosynthesis; acetyl-CoA biosynthesis; acetyl-CoA from acetate: step 1/2. Its function is as follows. Catalyzes the formation of acetyl phosphate from acetate and ATP. Can also catalyze the reverse reaction. This chain is Acetate kinase, found in Onion yellows phytoplasma (strain OY-M).